Here is a 402-residue protein sequence, read N- to C-terminus: Tol-Pal system protein TolB (402 aa).

Positions 1-17 are cleaved as a signal peptide; the sequence is MKKIVAIFLVFLGSLWA.

Belongs to the TolB family. As to quaternary structure, the Tol-Pal system is composed of five core proteins: the inner membrane proteins TolA, TolQ and TolR, the periplasmic protein TolB and the outer membrane protein Pal. They form a network linking the inner and outer membranes and the peptidoglycan layer.

The protein resides in the periplasm. In terms of biological role, part of the Tol-Pal system, which plays a role in outer membrane invagination during cell division and is important for maintaining outer membrane integrity. This Campylobacter jejuni subsp. jejuni serotype O:2 (strain ATCC 700819 / NCTC 11168) protein is Tol-Pal system protein TolB.